The chain runs to 782 residues: U-box domain-containing protein 7 (782 aa).

In terms of domain architecture, U-box spans valine 271–glutamine 345. ARM repeat units lie at residues glutamate 456–valine 499, asparagine 502–aspartate 541, glutamate 542–threonine 581, serine 583–serine 623, and glutamate 626–asparagine 665. Over residues glutamate 707 to arginine 729 the composition is skewed to basic and acidic residues. The interval glutamate 707 to serine 765 is disordered. The segment covering histidine 739–valine 748 has biased composition (polar residues).

The enzyme catalyses S-ubiquitinyl-[E2 ubiquitin-conjugating enzyme]-L-cysteine + [acceptor protein]-L-lysine = [E2 ubiquitin-conjugating enzyme]-L-cysteine + N(6)-ubiquitinyl-[acceptor protein]-L-lysine.. Its pathway is protein modification; protein ubiquitination. Functions as an E3 ubiquitin ligase. The polypeptide is U-box domain-containing protein 7 (PUB7) (Arabidopsis thaliana (Mouse-ear cress)).